Consider the following 57-residue polypeptide: Large ribosomal subunit protein bL32 (57 aa).

The segment covering 1-19 (MATPKRRMSRANTRSRRSQ) has biased composition (basic residues). Positions 1–21 (MATPKRRMSRANTRSRRSQWK) are disordered.

Belongs to the bacterial ribosomal protein bL32 family.

In Mycobacterium ulcerans (strain Agy99), this protein is Large ribosomal subunit protein bL32.